The sequence spans 261 residues: Small ribosomal subunit protein mS23 (261 aa).

The tract at residues 228-261 (EQRAAAFTGAPEIPSTEDSLGLEEGVEEKQPQQA) is disordered.

The protein belongs to the mitochondrion-specific ribosomal protein mS23 family. In terms of assembly, component of the mitochondrial small ribosomal subunit.

The protein resides in the mitochondrion. The polypeptide is Small ribosomal subunit protein mS23 (rsm25) (Aspergillus oryzae (strain ATCC 42149 / RIB 40) (Yellow koji mold)).